Consider the following 299-residue polypeptide: uncharacterized protein (299 aa).

This is an uncharacterized protein from Bacillus subtilis (strain 168).